A 362-amino-acid chain; its full sequence is Microfibril-associated glycoprotein 3 (362 aa).

The N-terminal stretch at 1–19 (MKLHCCLFTLVASIIVPAA) is a signal peptide. Over 20–146 (FVLEDVDFNQ…TLRVIFTSGD (127 aa)) the chain is Extracellular. Asparagine 36, asparagine 41, and asparagine 110 each carry an N-linked (GlcNAc...) asparagine glycan. Residues 45–137 (PSSFELSASS…SPIRASYSVT (93 aa)) enclose the Ig-like C2-type domain. A disulfide bridge connects residues cysteine 73 and cysteine 124. A helical transmembrane segment spans residues 147–167 (MSVYYMIVCLIAFTITLILNV). At 168–362 (TRLCMMSSHL…KDGAYENSQL (195 aa)) the chain is on the cytoplasmic side. Disordered regions lie at residues 282-306 (GIYVINPEMGRSNSPGGDSDDGSLN) and 319-362 (HLQS…NSQL). Residues 319 to 337 (HLQSETKSIDTESQGSSHF) are compositionally biased toward polar residues.

Post-translationally, glycosylated.

The protein resides in the cell membrane. Functionally, component of the elastin-associated microfibrils. This Pongo abelii (Sumatran orangutan) protein is Microfibril-associated glycoprotein 3 (MFAP3).